The primary structure comprises 114 residues: Progonadoliberin-2 (114 aa).

A signal peptide spans 1-24; sequence MASSRRGLLLLLMLLTAHPGPSEA. Glycine amide is present on G34. Residues 35-59 form a disordered region; the sequence is GKRALSSAQDPQNALRPPAGSPAQA.

The protein belongs to the GnRH family.

The protein resides in the secreted. In terms of biological role, stimulates the secretion of gonadotropins; it stimulates the secretion of both luteinizing and follicle-stimulating hormones. In Macaca mulatta (Rhesus macaque), this protein is Progonadoliberin-2 (GNRH2).